A 64-amino-acid chain; its full sequence is Large ribosomal subunit protein bL28 (64 aa).

The disordered stretch occupies residues 1–23 (MSKECYFTGRKTVSSNNRSHAMN). Residues 11–23 (KTVSSNNRSHAMN) show a composition bias toward polar residues.

This sequence belongs to the bacterial ribosomal protein bL28 family.

This Lactococcus lactis subsp. cremoris (strain SK11) protein is Large ribosomal subunit protein bL28.